Here is a 1212-residue protein sequence, read N- to C-terminus: Solute carrier family 12 member 2 (1212 aa).

Met-1 carries the post-translational modification N-acetylmethionine. Residues 1-286 (MEPRPTAPSS…AESKGVVKFG (286 aa)) are Cytoplasmic-facing. 3 disordered regions span residues 36 to 81 (GTAV…QSRF), 112 to 138 (GAKQ…AKGR), and 150 to 193 (SSAE…GGGS). Residues Ser-77 and Ser-79 each carry the phosphoserine modification. The RFXV motif 1 motif lies at 80–83 (RFQV). Residues 127–137 (EPAKGSEEAKG) show a composition bias toward basic and acidic residues. Residues 138–141 (RFRV) carry the RFXV motif 2 motif. A compositionally biased stretch (low complexity) spans 150–160 (SSAEDSLSDAA). Residues Thr-203, Thr-207, and Thr-212 each carry the phosphothreonine; by OXSR1 and STK39 modification. Thr-217 and Thr-230 each carry phosphothreonine. Ser-242 is modified (phosphoserine). At Thr-266 the chain carries Phosphothreonine. A discontinuously helical transmembrane segment spans residues 287 to 316 (WIKGVLVRCMLNIWGVMLFIRLSWIVGQAG). Leu-297 serves as a coordination point for Na(+). 2 residues coordinate K(+): Asn-298 and Ile-299. Position 300 (Trp-300) interacts with Na(+). Chloride contacts are provided by Gly-301, Val-302, and Met-303. A helical membrane pass occupies residues 317-336 (IGLSVLVIMMATVVTTITGL). Residues 337 to 367 (STSAIATNGFVRGGGAYYLISRSLGPEFGGA) lie on the Cytoplasmic side of the membrane. The chain crosses the membrane as a helical span at residues 368–395 (IGLIFAFANAVAVAMYVVGFAETVVELL). Phe-372 contacts chloride. Tyr-383 is a binding site for K(+). Over 396-405 (KEHSILMIDE) the chain is Extracellular. The chain crosses the membrane as a helical span at residues 406–429 (INDIRIIGAITVVILLGISVAGME). The Cytoplasmic segment spans residues 430-432 (WEA). A helical transmembrane segment spans residues 433–454 (KAQIVLLVILLLAIGDFVIGTF). At 455 to 486 (IPLESKKPKGFFGYKSEIFNENFGPDFREEET) the chain is on the extracellular side. A discontinuously helical transmembrane segment spans residues 487–504 (FFSVFAIFFPAATGILAG). The K(+) site is built by Pro-496, Ala-497, and Thr-499. Chloride is bound by residues Pro-496 and Ala-497. Residues Gly-500 and Ile-501 each contribute to the chloride site. The Cytoplasmic portion of the chain corresponds to 505 to 519 (ANISGDLADPQSAIP). A helical transmembrane segment spans residues 520–541 (KGTLLAILITTLVYVGIAVSVG). Topologically, residues 542–598 (SCVVRDATGNVNDTIVTELTNCTSAACKLNFDFSSCESSPCSYGLMNNFQVMSMVSG) are extracellular. Asn-553 and Asn-562 each carry an N-linked (GlcNAc...) asparagine glycan. 2 disulfides stabilise this stretch: Cys-563-Cys-568 and Cys-577-Cys-582. Residues 599 to 623 (FTPLISAGIFSATLSSALASLVSAP) form a helical membrane-spanning segment. Ala-610, Ser-613, and Ser-614 together coordinate Na(+). Residues 624-651 (KIFQALCKDNIYPAFQMFAKGYGKNNEP) are Cytoplasmic-facing. Helical transmembrane passes span 652–672 (LRGY…AELN) and 673–691 (VIAP…LINF). Residues Phe-682 and Tyr-686 each coordinate chloride. The Cytoplasmic portion of the chain corresponds to 692-714 (SVFHASLAKSPGWRPAFKYYNMW). 2 helical membrane-spanning segments follow: residues 715–732 (ISLL…VINW) and 733–745 (WAAL…VLGL). Residues 746–1212 (YIYVTYKKPD…NHQSVLTFYS (467 aa)) lie on the Cytoplasmic side of the membrane. Residues 761–778 (STQALTYLNALQHSIRLS) form a scissor helix region. Residues Ser-940 and Ser-944 each carry the phosphoserine modification. Positions 962 to 978 (LDTSKPLSEKPITHKVE) are enriched in basic and acidic residues. The disordered stretch occupies residues 962 to 989 (LDTSKPLSEKPITHKVEEEDGKTATQPL). A Phosphoserine modification is found at Ser-994.

Belongs to the SLC12A transporter family. In terms of assembly, homodimer; adopts a domain-swap conformation at the scissor helices connecting the transmembrane domain and C-terminal domain. Post-translationally, phosphorylated at Thr-203, Thr-207 and Thr-212 by OXSR1/OSR1 and STK39/SPAK downstream of WNK kinases (WNK1, WNK2, WNK3 or WNK4), promoting its activity. In terms of tissue distribution, expressed in many tissues.

The protein localises to the basolateral cell membrane. The enzyme catalyses K(+)(out) + 2 chloride(out) + Na(+)(out) = K(+)(in) + 2 chloride(in) + Na(+)(in). With respect to regulation, activated following phosphorylation by OXSR1/OSR1 and STK39/SPAK downstream of WNK kinases (WNK1, WNK2, WNK3 or WNK4). Inhibited by bumetanide. Inhibited by furosemide. Its function is as follows. Cation-chloride cotransporter which mediates the electroneutral transport of chloride, potassium and/or sodium ions across the membrane. Plays a vital role in the regulation of ionic balance and cell volume. The protein is Solute carrier family 12 member 2 (SLC12A2) of Homo sapiens (Human).